An 828-amino-acid polypeptide reads, in one-letter code: Outer membrane usher protein MrkC (828 aa).

The first 18 residues, 1–18 (MKQRSICPGRLSTAIAVA), serve as a signal peptide directing secretion. Residues cysteine 813 and cysteine 827 are joined by a disulfide bond.

It belongs to the fimbrial export usher family.

The protein resides in the cell outer membrane. In terms of biological role, involved in the export and assembly of the type 3 fimbrial subunit (MrkA). The chain is Outer membrane usher protein MrkC (mrkC) from Klebsiella pneumoniae.